Here is a 179-residue protein sequence, read N- to C-terminus: MSRIGKQPVPVPAGVDVTISGQNVSVKGPKGTLTLDVAEPIEVSRNDDGAIVVTRPNDERRNRSLHGLSRTLIANLVTGVTEGYTTKMEIFGVGYRVVAKGSNLEFALGYSHPVLINAPEGVTFAVETPTKFSISGIDKQAVGQIAANIRRLRKSDPYKGKGIRYEGEQIRRKVGKTGK.

It belongs to the universal ribosomal protein uL6 family. Part of the 50S ribosomal subunit.

This protein binds to the 23S rRNA, and is important in its secondary structure. It is located near the subunit interface in the base of the L7/L12 stalk, and near the tRNA binding site of the peptidyltransferase center. This is Large ribosomal subunit protein uL6 from Mycolicibacterium gilvum (strain PYR-GCK) (Mycobacterium gilvum (strain PYR-GCK)).